Consider the following 258-residue polypeptide: Uroplakin-1a (258 aa).

Residues Met1–Pro14 lie on the Cytoplasmic side of the membrane. Residues Val15–Phe35 form a helical membrane-spanning segment. At Ala36 to Asp59 the chain is on the extracellular side. The helical transmembrane segment at Val60 to Leu86 threads the bilayer. The Cytoplasmic segment spans residues Cys87–Ser91. The chain crosses the membrane as a helical span at residues Met92–Ile112. Residues Thr113–Thr230 lie on the Extracellular side of the membrane. N-linked (GlcNAc...) asparagine glycosylation is present at Asn170. A helical membrane pass occupies residues Trp231–Met252. The Cytoplasmic portion of the chain corresponds to Tyr253–Leu258.

This sequence belongs to the tetraspanin (TM4SF) family. In terms of assembly, homodimer; disulfide-linked. Interacts with uroplakin-2 (UPK2). High expression restricted to ureteric urothelium (most superficial cells); low expression in prostate. Expression in normal urothelial cells is lost in culture. Some expression in tumor cell lines derived from urothelial malignancies.

The protein localises to the membrane. In terms of biological role, component of the asymmetric unit membrane (AUM); a highly specialized biomembrane elaborated by terminally differentiated urothelial cells. May play an important role in normal bladder epithelial physiology, possibly in regulating membrane permeability of superficial umbrella cells or in stabilizing the apical membrane through AUM/cytoskeletal interactions. In Homo sapiens (Human), this protein is Uroplakin-1a (UPK1A).